Here is a 1387-residue protein sequence, read N- to C-terminus: MQCYTELLPPSGVTHAISLPFLSATSNNLIVAKTSILQVFSLVNVAYGTSAPPNADDKGRVERQQYTKLILVAEYDLSGTITGLGRVKILDSRSGGEALLVSTRNAKLSLVEWDHERHGISTISIHYYEREDVHSSPWTPDLRLCPSLLAVDPSSRCAILNFGIHSVAILPFHQTGDDLVMDEFDEDLDEKPEGASNIPAQAAVANDTTMYKTPYASSFVLPLTALDPALVHPIHLAFLYEYREPTFGILYSHLTTSSALLHDRKDIVSYAVFTLDIQQRASTTLITVSRLPSDLWKVVPLPPPIGGALLIGSNELIHVDQAGKTNAVGINEFARQASAFSMVDQSDLGLRLEGCVVEQLGTDSGDILLVLADGKMAILRLKVDGRSVSGISAQLVSEKAGGSILKARPSCSASLGRGKVFFGSEETDSLLIGWSRPSQSMRKPKVESADDVFGDHSETEDDEDDIYEDDLYSTPVNQTTLSKTTSQTNGLNKDDFVFRSHDRLWNLGPMSDVTLGRPPGSHDKNRKQSSSRTSADLELVVTQGKGNAGGLAVLQRELDPYVIDSMKMDNVDGVWSIQVGAPDSTNTRTSSRNYDKYLVFSKSTEPGKEQSVVYSVGGSGIEEMKAPEFNPNEDSTVDIGTLAGGTRVVQVLKSEVRSYDTNLELAQIYPIWDEDTSDELSVVSASFAEPYVLIVRDDQSLLLLQADKSGDLDEVNIDGILSSHRWLSGCLYLDKYHTFVPTKGQDQPLSDNILLVLLRADHTLFIFSLPTLTEPLCSVDGVDLLPLILSCEPPPKRVTYRETLSEVLIADLGDSISRQPYMILRTANDDLILYQPYHPKTSLDKPELRFVKIIDHFLPRFDPSPKAYMPHSKFLRAYSDICGYKTVFMSGSNPCFVMKSSTSSPHVLRLRGEAVSSLSSFHIPACEKGFAYVDASNMVRMCRLPSNTRFDNSWVTRKVHVGDQIDCVEYFAHSEIYALGSSHKVDFKLPEDDEIHPEWRSEVISFMPQLERGCIKLLSPRTWSVVDSYELGDAERVMCMKTINMEISEITHEMKDMLVVGTATVRGEDITPRGSIYVFEIIEVAPDPDRPETNRKLKIFAKDDVKGAVTAVSGIGGQGFLIMAQGQKCMVRGLKEDGSLLPVAFMDMQCYVKVLKELQGTGLCIMGDALKGIWFAGYSEEPYRLTLFGKDNEYLQVIAADFLPDGKRLYILVADDDCTIHVLEYDPEDPTSSKGDRLLHRSSFHTGHFTSTMTLLPEHSSSPSADDPEEDDMDVDYVPKSYQVLVTSQEGSIGVVTPLTEDSYRRLSALQSQLVTSMEHPCGLNPKAYRAVESDGFGGRGIVDGNLLLRWLDMGVQRKAEIAGRVGADIESIRVDLETISGGLDFL.

Disordered stretches follow at residues 440–493 (SMRK…GLNK) and 509–534 (PMSD…SRTS). The span at 444 to 457 (PKVESADDVFGDHS) shows a compositional bias: basic and acidic residues. The span at 458–471 (ETEDDEDDIYEDDL) shows a compositional bias: acidic residues. The segment covering 474-491 (TPVNQTTLSKTTSQTNGL) has biased composition (polar residues).

It belongs to the CFT1 family.

The protein resides in the nucleus. RNA-binding component of the cleavage and polyadenylation factor (CPF) complex, which plays a key role in polyadenylation-dependent pre-mRNA 3'-end formation and cooperates with cleavage factors including the CFIA complex and NAB4/CFIB. Involved in poly(A) site recognition. May be involved in coupling transcription termination and mRNA 3'-end formation. The polypeptide is Protein CFT1 (CFT1) (Coccidioides immitis (strain RS) (Valley fever fungus)).